The primary structure comprises 69 residues: UPF0337 protein DIP1660 (69 aa).

Composition is skewed to basic and acidic residues over residues 1-19 (MSDF…KEAV) and 30-41 (DEGRADQTKADV). The interval 1–42 (MSDFENKIEELGGKAKEAVGEATENEQLADEGRADQTKADVK) is disordered.

The protein belongs to the UPF0337 (CsbD) family.

The sequence is that of UPF0337 protein DIP1660 from Corynebacterium diphtheriae (strain ATCC 700971 / NCTC 13129 / Biotype gravis).